Here is a 306-residue protein sequence, read N- to C-terminus: Latrophilin receptor-like protein A (306 aa).

At 1–15 the chain is on the extracellular side; that stretch reads MPSQLLNTVLSYLTD. A helical transmembrane segment spans residues 16-36; sequence ILLSLSIVGSFLTIFTFMLYP. The Cytoplasmic portion of the chain corresponds to 37–41; sequence KLRSY. Residues 42-62 form a helical membrane-spanning segment; sequence PIKLIIYLCMSIVFSLFFFEI. At 63–70 the chain is on the extracellular side; the sequence is SFRSSNSL. Residues 71–91 traverse the membrane as a helical segment; that stretch reads FCIPAAILVHYFFLANFFWTF. Over 92–113 the chain is Cytoplasmic; sequence SVSFNFFQMIVKRNRDSEFYER. Residues 114–134 form a helical membrane-spanning segment; it reads YYHLISWGIPFIIIIFCAAFK. The Extracellular portion of the chain corresponds to 135 to 152; it reads KYVDRGGFCYLEDQYSVY. A helical membrane pass occupies residues 153–173; it reads FGFFMPGVIIVCSNICIYVFV. The Cytoplasmic segment spans residues 174-196; the sequence is AKEIYKTLRHTPTQKRQTVKEFR. The helical transmembrane segment at 197–217 threads the bilayer; it reads VYFSIFVSIGSSWIFGFIYMF. The Extracellular segment spans residues 218–222; that stretch reads SDSNS. A helical membrane pass occupies residues 223 to 243; that stretch reads IIGYIFLILFSISTSLQGFFI. At 244–306 the chain is on the cytoplasmic side; that stretch reads FISYCLNYKV…TTTTTNVYSA (63 aa). A disordered region spans residues 279 to 306; sequence TTQSGPTGTTDSSSTMTSTTTTTNVYSA.

This sequence belongs to the G-protein coupled receptor 2 family. LN-TM7 subfamily.

The protein resides in the membrane. The sequence is that of Latrophilin receptor-like protein A (lrlA) from Dictyostelium discoideum (Social amoeba).